A 248-amino-acid polypeptide reads, in one-letter code: MNVRDLSFKLNSIFDINKYEHIDKNLNGLQVGNINAKVNKVAFAVDASFSTLKEAKGNDFLITHHGIFWSKKERIVSNMYDKTKFLIENNLALYSVHLPMDAHSVYSHSKVFSDFLGLKNSFAFANYGGVNLGIIADSVFSFSEILEKIKKENKHILFSKKFKESVNKVAIVSGSGYSFFEEALCHDVDLFITGDTSHQIYSLAEEFGVNLIFAGHYFTETFGLIKLMEDFKIQEDLEVKFICKNTNL.

The a divalent metal cation site is built by His64, His65, Asp101, His216, and Glu220.

The protein belongs to the GTP cyclohydrolase I type 2/NIF3 family. As to quaternary structure, homohexamer.

This is GTP cyclohydrolase 1 type 2 homolog from Borreliella burgdorferi (strain ATCC 35210 / DSM 4680 / CIP 102532 / B31) (Borrelia burgdorferi).